The following is a 407-amino-acid chain: Protein S-acyltransferase 8 (407 aa).

The next 2 helical transmembrane spans lie at 29-49 (SLPL…VFVA) and 62-82 (GYAI…LLFF). Residues 136-186 (KYCDTCMLYRPPRCSHCSICNNCVERFDHHCPWVGQCIGLRNYRYFFMFVS) enclose the DHHC domain. The S-palmitoyl cysteine intermediate role is filled by C166. Transmembrane regions (helical) follow at residues 181–201 (FFMF…MSAV) and 224–244 (AVVL…LTAF). The disordered stretch occupies residues 348 to 368 (AEDANNNQPHHTLDIDHERAG). A compositionally biased stretch (basic and acidic residues) spans 358-368 (HTLDIDHERAG). At S385 the chain carries Phosphoserine.

It belongs to the DHHC palmitoyltransferase family. As to expression, expressed in flowers and pollen.

The protein resides in the cell membrane. The enzyme catalyses L-cysteinyl-[protein] + hexadecanoyl-CoA = S-hexadecanoyl-L-cysteinyl-[protein] + CoA. S-acyltransferase involved in protein lipid modification. The sequence is that of Protein S-acyltransferase 8 (PAT08) from Arabidopsis thaliana (Mouse-ear cress).